The primary structure comprises 355 residues: Uroporphyrinogen decarboxylase (355 aa).

Residues 27–31 (RQAGR), aspartate 77, tyrosine 154, threonine 209, and histidine 328 contribute to the substrate site.

Belongs to the uroporphyrinogen decarboxylase family. As to quaternary structure, homodimer.

Its subcellular location is the cytoplasm. The catalysed reaction is uroporphyrinogen III + 4 H(+) = coproporphyrinogen III + 4 CO2. It participates in porphyrin-containing compound metabolism; protoporphyrin-IX biosynthesis; coproporphyrinogen-III from 5-aminolevulinate: step 4/4. Catalyzes the decarboxylation of four acetate groups of uroporphyrinogen-III to yield coproporphyrinogen-III. In Vibrio campbellii (strain ATCC BAA-1116), this protein is Uroporphyrinogen decarboxylase.